The following is a 251-amino-acid chain: MRRPMVAGNWKMHGTRASVVELTQGLGNMSLPSGVEVAVFPPSLFVTQVIDGLEGKGINVGAQNSAVQPEQGALTGEVAPSQLAEVGCKYVLVGHSERRQIIGESDEVLNQKFAAAQKSGLTPVLCIGETLAEREAGETLKVVGRQLSSVIDAFGIKAFANAVIAYEPVWAIGTGLTASPQQAQDVHAAIRKQLAAMDAEVAANVQLLYGGSVKAANAAELFGMPDIDGGLIGGASLNADEFGAICRAAGN.

Residue 9 to 11 (NWK) participates in substrate binding. Histidine 95 (electrophile) is an active-site residue. Glutamate 167 serves as the catalytic Proton acceptor. Residues glycine 173, serine 212, and 233 to 234 (GG) each bind substrate.

It belongs to the triosephosphate isomerase family. As to quaternary structure, homodimer.

It is found in the cytoplasm. The catalysed reaction is D-glyceraldehyde 3-phosphate = dihydroxyacetone phosphate. The protein operates within carbohydrate biosynthesis; gluconeogenesis. It participates in carbohydrate degradation; glycolysis; D-glyceraldehyde 3-phosphate from glycerone phosphate: step 1/1. Functionally, involved in the gluconeogenesis. Catalyzes stereospecifically the conversion of dihydroxyacetone phosphate (DHAP) to D-glyceraldehyde-3-phosphate (G3P). The protein is Triosephosphate isomerase of Pseudomonas entomophila (strain L48).